The primary structure comprises 320 residues: Protein LATERAL ROOT PRIMORDIUM 1 (320 aa).

The segment at 90 to 110 is disordered; that stretch reads QTTVGTSSNNSGSGSGASGTA. Residues C112, C115, C123, C128, C132, and C139 each coordinate Zn(2+). The segment at residues 112-139 is a DNA-binding region (zn(2)-C6 fungal-type; degenerate); that stretch reads CQDCGNQAKKECKQRRCRTCCKSRGFDC. The segment at 150–223 is disordered; it reads AARRRERQVM…QDGGGSREAW (74 aa). Low complexity predominate over residues 168–177; the sequence is GSSLSTSSGT. Residues 193-214 show a composition bias toward polar residues; sequence ATSHTSTSNTPPQSFETSSSRQ. Positions 256-259 match the Required for homo- and heterodimerization motif; sequence IGGH.

It belongs to the SHI protein family. Homodimer. In terms of tissue distribution, restricted to lateral root primordia.

Its subcellular location is the nucleus. Functionally, transcription activator that binds DNA on 5'-ACTCTAC-3' and promotes auxin homeostasis-regulating gene expression (e.g. YUC genes), as well as genes affecting stamen development, cell expansion and timing of flowering. Synergistically with other SHI-related proteins, regulates gynoecium, stamen and leaf development in a dose-dependent manner, controlling apical-basal patterning. Promotes style and stigma formation, and influence vascular development during gynoecium development. May also have a role in the formation and/or maintenance of the shoot apical meristem (SAM). Modulates root growth. In Arabidopsis thaliana (Mouse-ear cress), this protein is Protein LATERAL ROOT PRIMORDIUM 1 (LRP1).